A 500-amino-acid polypeptide reads, in one-letter code: Probable trehalose-phosphate phosphatase 8 (500 aa).

This sequence belongs to the trehalose phosphatase family. A divalent metal cation serves as cofactor.

It carries out the reaction alpha,alpha-trehalose 6-phosphate + H2O = alpha,alpha-trehalose + phosphate. It functions in the pathway glycan biosynthesis; trehalose biosynthesis. Functionally, removes the phosphate from trehalose 6-phosphate to produce free trehalose. Trehalose accumulation in plant may improve abiotic stress tolerance. This Oryza sativa subsp. japonica (Rice) protein is Probable trehalose-phosphate phosphatase 8 (TPP8).